We begin with the raw amino-acid sequence, 975 residues long: Translation initiation factor IF-2 (975 aa).

Composition is skewed to basic and acidic residues over residues 48–63 (DHLR…DKRK) and 120–177 (AELK…EAAA). Disordered regions lie at residues 48 to 85 (DHLR…KART) and 98 to 390 (KRDD…PTEP). Low complexity predominate over residues 178-211 (KRAAAAQAEAAQQAAAAREQAQRAQSEPAEQSAQ). Over residues 212–263 (DEARAAAERAAQREAAKKAEDAAREAADKARAEQEEIRKRREAAEAEARAIR) the composition is skewed to basic and acidic residues. The span at 302–330 (KPAGEAAAARPAAKKPASGAPAPAAAPAG) shows a compositional bias: low complexity. Over residues 359-372 (SSGGVDRGWRGGPK) the composition is skewed to gly residues. The 170-residue stretch at 475-644 (PRPPVVTVMG…LLQAEVLELK (170 aa)) folds into the tr-type G domain. The segment at 484 to 491 (GHVDHGKT) is G1. 484-491 (GHVDHGKT) serves as a coordination point for GTP. The G2 stretch occupies residues 509 to 513 (GITQH). A G3 region spans residues 530-533 (DTPG). GTP contacts are provided by residues 530–534 (DTPGH) and 584–587 (NKID). Positions 584-587 (NKID) are G4. The interval 620-622 (SAK) is G5.

Belongs to the TRAFAC class translation factor GTPase superfamily. Classic translation factor GTPase family. IF-2 subfamily.

The protein localises to the cytoplasm. Functionally, one of the essential components for the initiation of protein synthesis. Protects formylmethionyl-tRNA from spontaneous hydrolysis and promotes its binding to the 30S ribosomal subunits. Also involved in the hydrolysis of GTP during the formation of the 70S ribosomal complex. This is Translation initiation factor IF-2 from Burkholderia pseudomallei (strain 1106a).